Reading from the N-terminus, the 471-residue chain is tRNA-2-methylthio-N(6)-dimethylallyladenosine synthase (471 aa).

In terms of domain architecture, MTTase N-terminal spans 29-146; sequence KKFHIKTYGC…LPELIAKVNR (118 aa). [4Fe-4S] cluster contacts are provided by cysteine 38, cysteine 74, cysteine 109, cysteine 187, cysteine 191, and cysteine 194. The Radical SAM core domain occupies 173–405; sequence RVPQSSAFLS…QQLLKEKQLE (233 aa). The TRAM domain occupies 408–467; it reads KKMIGKTVTVLFDKKHPDKISGRTEYMQQVFSDDSNLLDKIVTMRVEDASTFTLKCTAED.

Belongs to the methylthiotransferase family. MiaB subfamily. As to quaternary structure, monomer. It depends on [4Fe-4S] cluster as a cofactor.

Its subcellular location is the cytoplasm. The catalysed reaction is N(6)-dimethylallyladenosine(37) in tRNA + (sulfur carrier)-SH + AH2 + 2 S-adenosyl-L-methionine = 2-methylsulfanyl-N(6)-dimethylallyladenosine(37) in tRNA + (sulfur carrier)-H + 5'-deoxyadenosine + L-methionine + A + S-adenosyl-L-homocysteine + 2 H(+). Functionally, catalyzes the methylthiolation of N6-(dimethylallyl)adenosine (i(6)A), leading to the formation of 2-methylthio-N6-(dimethylallyl)adenosine (ms(2)i(6)A) at position 37 in tRNAs that read codons beginning with uridine. The protein is tRNA-2-methylthio-N(6)-dimethylallyladenosine synthase of Neorickettsia sennetsu (strain ATCC VR-367 / Miyayama) (Ehrlichia sennetsu).